A 95-amino-acid chain; its full sequence is Co-chaperonin GroES (95 aa).

The protein belongs to the GroES chaperonin family. In terms of assembly, heptamer of 7 subunits arranged in a ring. Interacts with the chaperonin GroEL.

The protein resides in the cytoplasm. Functionally, together with the chaperonin GroEL, plays an essential role in assisting protein folding. The GroEL-GroES system forms a nano-cage that allows encapsulation of the non-native substrate proteins and provides a physical environment optimized to promote and accelerate protein folding. GroES binds to the apical surface of the GroEL ring, thereby capping the opening of the GroEL channel. This chain is Co-chaperonin GroES, found in Chlorobium limicola (strain DSM 245 / NBRC 103803 / 6330).